Here is a 353-residue protein sequence, read N- to C-terminus: Photosystem II D2 protein (353 aa).

T2 is subject to N-acetylthreonine. Position 2 is a phosphothreonine (T2). The helical transmembrane segment at 41–61 (CAYFAVGGWFTGTTFVTSWYT) threads the bilayer. H118 serves as a coordination point for chlorophyll a. The helical transmembrane segment at 125 to 141 (GFMLRQFELARSVQLRP) threads the bilayer. Residues Q130 and N143 each contribute to the pheophytin a site. A helical transmembrane segment spans residues 153-166 (VFVSVFLIYPLGQS). Chlorophyll a is bound at residue H198. A helical membrane pass occupies residues 208–228 (AALLCAIHGATVENTLFEDGD). 2 residues coordinate a plastoquinone: H215 and F262. H215 provides a ligand contact to Fe cation. H269 serves as a coordination point for Fe cation. Residues 279–295 (GLWMSALGVVGLALNLR) traverse the membrane as a helical segment.

This sequence belongs to the reaction center PufL/M/PsbA/D family. PSII is composed of 1 copy each of membrane proteins PsbA, PsbB, PsbC, PsbD, PsbE, PsbF, PsbH, PsbI, PsbJ, PsbK, PsbL, PsbM, PsbT, PsbX, PsbY, PsbZ, Psb30/Ycf12, at least 3 peripheral proteins of the oxygen-evolving complex and a large number of cofactors. It forms dimeric complexes. The cofactor is The D1/D2 heterodimer binds P680, chlorophylls that are the primary electron donor of PSII, and subsequent electron acceptors. It shares a non-heme iron and each subunit binds pheophytin, quinone, additional chlorophylls, carotenoids and lipids. There is also a Cl(-1) ion associated with D1 and D2, which is required for oxygen evolution. The PSII complex binds additional chlorophylls, carotenoids and specific lipids..

It is found in the plastid. Its subcellular location is the chloroplast thylakoid membrane. It carries out the reaction 2 a plastoquinone + 4 hnu + 2 H2O = 2 a plastoquinol + O2. Photosystem II (PSII) is a light-driven water:plastoquinone oxidoreductase that uses light energy to abstract electrons from H(2)O, generating O(2) and a proton gradient subsequently used for ATP formation. It consists of a core antenna complex that captures photons, and an electron transfer chain that converts photonic excitation into a charge separation. The D1/D2 (PsbA/PsbD) reaction center heterodimer binds P680, the primary electron donor of PSII as well as several subsequent electron acceptors. D2 is needed for assembly of a stable PSII complex. This is Photosystem II D2 protein from Guizotia abyssinica (Niger).